We begin with the raw amino-acid sequence, 339 residues long: DNA-directed RNA polymerase subunit alpha (339 aa).

The interval 1 to 235 (MTIQKNWQEL…DQLNVFVNFE (235 aa)) is alpha N-terminal domain (alpha-NTD). The segment at 251 to 339 (FNPAFLKKVD…ELAKRFEDHY (89 aa)) is alpha C-terminal domain (alpha-CTD).

This sequence belongs to the RNA polymerase alpha chain family. As to quaternary structure, homodimer. The RNAP catalytic core consists of 2 alpha, 1 beta, 1 beta' and 1 omega subunit. When a sigma factor is associated with the core the holoenzyme is formed, which can initiate transcription.

The catalysed reaction is RNA(n) + a ribonucleoside 5'-triphosphate = RNA(n+1) + diphosphate. Functionally, DNA-dependent RNA polymerase catalyzes the transcription of DNA into RNA using the four ribonucleoside triphosphates as substrates. The protein is DNA-directed RNA polymerase subunit alpha of Rhodopseudomonas palustris (strain BisB18).